A 91-amino-acid polypeptide reads, in one-letter code: Acyl carrier protein (91 aa).

Positions 4–79 (QQILDKVQSI…QAVDYILQHK (76 aa)) constitute a Carrier domain. Serine 39 carries the O-(pantetheine 4'-phosphoryl)serine modification.

This sequence belongs to the acyl carrier protein (ACP) family. Post-translationally, 4'-phosphopantetheine is transferred from CoA to a specific serine of apo-ACP by AcpS. This modification is essential for activity because fatty acids are bound in thioester linkage to the sulfhydryl of the prosthetic group.

The protein localises to the plastid. The protein resides in the chloroplast. It functions in the pathway lipid metabolism; fatty acid biosynthesis. In terms of biological role, carrier of the growing fatty acid chain in fatty acid biosynthesis. The polypeptide is Acyl carrier protein (Cyanidioschyzon merolae (strain NIES-3377 / 10D) (Unicellular red alga)).